A 488-amino-acid chain; its full sequence is 3-octaprenyl-4-hydroxybenzoate carboxy-lyase (488 aa).

Asn172 is a binding site for Mn(2+). Residues 175-177 (IYR), 189-191 (RWL), and 194-195 (RG) contribute to the prenylated FMN site. Mn(2+) is bound at residue Glu238. Asp287 acts as the Proton donor in catalysis.

The protein belongs to the UbiD family. In terms of assembly, homohexamer. Prenylated FMN is required as a cofactor. It depends on Mn(2+) as a cofactor.

Its subcellular location is the cell membrane. The catalysed reaction is a 4-hydroxy-3-(all-trans-polyprenyl)benzoate + H(+) = a 2-(all-trans-polyprenyl)phenol + CO2. Its pathway is cofactor biosynthesis; ubiquinone biosynthesis. Catalyzes the decarboxylation of 3-octaprenyl-4-hydroxy benzoate to 2-octaprenylphenol, an intermediate step in ubiquinone biosynthesis. In Hahella chejuensis (strain KCTC 2396), this protein is 3-octaprenyl-4-hydroxybenzoate carboxy-lyase.